A 63-amino-acid polypeptide reads, in one-letter code: Beta-defensin 38 (63 aa).

The first 21 residues, 1 to 21 (MKISCFLLLILSLYFFQINQA), serve as a signal peptide directing secretion. 3 disulfide bridges follow: Cys29-Cys58, Cys36-Cys51, and Cys41-Cys59.

This sequence belongs to the beta-defensin family. In terms of tissue distribution, only expressed in epididymis (caput, corpus and cauda).

The protein localises to the secreted. Functionally, synthetic Defb38 kills both Gram-negative (E.coli and P.aeruginosa) and Gram-positive (E.faecium) bacteria. In Mus musculus (Mouse), this protein is Beta-defensin 38 (Defb38).